We begin with the raw amino-acid sequence, 633 residues long: 1-deoxy-D-xylulose-5-phosphate synthase (633 aa).

Thiamine diphosphate is bound by residues histidine 72 and 113-115 (GHS). Aspartate 144 lines the Mg(2+) pocket. Thiamine diphosphate contacts are provided by residues 145-146 (GA), asparagine 173, tyrosine 284, and glutamate 367. Residue asparagine 173 participates in Mg(2+) binding.

This sequence belongs to the transketolase family. DXPS subfamily. As to quaternary structure, homodimer. The cofactor is Mg(2+). Thiamine diphosphate serves as cofactor.

The enzyme catalyses D-glyceraldehyde 3-phosphate + pyruvate + H(+) = 1-deoxy-D-xylulose 5-phosphate + CO2. It participates in metabolic intermediate biosynthesis; 1-deoxy-D-xylulose 5-phosphate biosynthesis; 1-deoxy-D-xylulose 5-phosphate from D-glyceraldehyde 3-phosphate and pyruvate: step 1/1. In terms of biological role, catalyzes the acyloin condensation reaction between C atoms 2 and 3 of pyruvate and glyceraldehyde 3-phosphate to yield 1-deoxy-D-xylulose-5-phosphate (DXP). This is 1-deoxy-D-xylulose-5-phosphate synthase from Lysinibacillus sphaericus (strain C3-41).